The following is a 2183-amino-acid chain: Genome polyprotein (2183 aa).

Gly-2 is lipidated: N-myristoyl glycine; by host. The Cytoplasmic portion of the chain corresponds to 2-1493 (GAQVSTQKTG…HVSRAFICLQ (1492 aa)). Residues 566–582 (FYQGPTEESVERAMGRV) form an amphipathic alpha-helix region. Catalysis depends on for protease 2A activity residues His-870 and Asp-888. Residues Cys-905 and Cys-907 each contribute to the Zn(2+) site. Cys-959 acts as the For protease 2A activity in catalysis. Positions 965 and 967 each coordinate Zn(2+). Positions 1099 to 1171 (NNNWLKKFTE…EQSAPSQSDQ (73 aa)) are membrane-binding. The oligomerization stretch occupies residues 1099 to 1237 (NNNWLKKFTE…SPGAGKSVAT (139 aa)). The tract at residues 1120–1124 (AVKIQ) is RNA-binding. The 157-residue stretch at 1203–1359 (EKKMSNYIQF…SMYSQNGKIN (157 aa)) folds into the SF3 helicase domain. Residues Cys-1367, Cys-1379, and Cys-1384 each contribute to the Zn(2+) site. A C4-type; degenerate zinc finger spans residues 1367–1384 (CDEECCPVNFKKCCPLVC). The tract at residues 1411 to 1418 (EYNHRHSV) is RNA-binding. The segment at 1422–1427 (LEALFQ) is oligomerization. Residues 1494–1509 (ALTTFVSVAGIIYIIY) lie within the membrane without spanning it. Topologically, residues 1510 to 2183 (KLFAGFQGAY…TLRRKWLDAF (674 aa)) are cytoplasmic. Tyr-1519 bears the O-(5'-phospho-RNA)-tyrosine mark. The 179-residue stretch at 1539-1717 (GPAFEFAVAM…FSASLLRHYF (179 aa)) folds into the Peptidase C3 domain. Residues His-1578, Glu-1609, and Cys-1685 each act as for protease 3C activity in the active site. Positions 1948-2064 (GHLRAFDYSG…SYPLPIDASL (117 aa)) constitute a RdRp catalytic domain. Residues Asp-1954 and Asp-2050 each contribute to the Mg(2+) site.

It belongs to the picornaviruses polyprotein family. As to quaternary structure, interacts with capsid protein VP1 and capsid protein VP3 to form heterotrimeric protomers. In terms of assembly, interacts with capsid protein VP0, and capsid protein VP3 to form heterotrimeric protomers. Five protomers subsequently associate to form pentamers which serve as building blocks for the capsid. Interacts with capsid protein VP2, capsid protein VP3 and capsid protein VP4 following cleavage of capsid protein VP0. Interacts with host CXADR. Interacts with capsid protein VP1 and capsid protein VP3 in the mature capsid. As to quaternary structure, interacts with capsid protein VP0 and capsid protein VP1 to form heterotrimeric protomers. Five protomers subsequently associate to form pentamers which serve as building blocks for the capsid. Interacts with capsid protein VP4 in the mature capsid. Interacts with protein 2C; this interaction may be important for virion morphogenesis. In terms of assembly, interacts with capsid protein VP1 and capsid protein VP3. Homodimer. As to quaternary structure, homohexamer; forms a hexameric ring structure with 6-fold symmetry characteristic of AAA+ ATPases. Interacts (via N-terminus) with host RTN3 (via reticulon domain); this interaction is important for viral replication. Interacts with capsid protein VP3; this interaction may be important for virion morphogenesis. In terms of assembly, interacts with protein 3CD. Homodimer. Interacts with host GBF1. Interacts (via GOLD domain) with host ACBD3 (via GOLD domain); this interaction allows the formation of a viral protein 3A/ACBD3 heterotetramer with a 2:2 stoichiometry, which will stimulate the recruitment of host PI4KB in order to synthesize PI4P at the viral RNA replication sites. As to quaternary structure, interacts with RNA-directed RNA polymerase. In terms of assembly, interacts with protein 3AB and with RNA-directed RNA polymerase. Interacts with Viral protein genome-linked and with protein 3CD. Mg(2+) serves as cofactor. Post-translationally, specific enzymatic cleavages in vivo by the viral proteases yield processing intermediates and the mature proteins. In terms of processing, myristoylation is required for the formation of pentamers during virus assembly. Further assembly of 12 pentamers and a molecule of genomic RNA generates the provirion. During virion maturation, immature virions are rendered infectious following cleavage of VP0 into VP4 and VP2. This maturation seems to be an autocatalytic event triggered by the presence of RNA in the capsid and it is followed by a conformational change infectious virion. Post-translationally, myristoylation is required during RNA encapsidation and formation of the mature virus particle. In terms of processing, VPg is uridylylated by the polymerase into VPg-pUpU. This acts as a nucleotide-peptide primer for the genomic RNA replication.

Its subcellular location is the virion. The protein localises to the host cytoplasm. The protein resides in the host cytoplasmic vesicle membrane. It localises to the host nucleus. It catalyses the reaction a ribonucleoside 5'-triphosphate + H2O = a ribonucleoside 5'-diphosphate + phosphate + H(+). It carries out the reaction Selective cleavage of Tyr-|-Gly bond in the picornavirus polyprotein.. The catalysed reaction is RNA(n) + a ribonucleoside 5'-triphosphate = RNA(n+1) + diphosphate. The enzyme catalyses Selective cleavage of Gln-|-Gly bond in the poliovirus polyprotein. In other picornavirus reactions Glu may be substituted for Gln, and Ser or Thr for Gly.. Replication or transcription is subject to high level of random mutations by the nucleotide analog ribavirin. Its function is as follows. Forms an icosahedral capsid of pseudo T=3 symmetry with capsid proteins VP2 and VP3. The capsid is 300 Angstroms in diameter, composed of 60 copies of each capsid protein and enclosing the viral positive strand RNA genome. Capsid protein VP1 mainly forms the vertices of the capsid. Capsid protein VP1 interacts with host CXADR to provide virion attachment to target host cells. This attachment induces virion internalization. Tyrosine kinases are probably involved in the entry process. After binding to its receptor, the capsid undergoes conformational changes. Capsid protein VP1 N-terminus (that contains an amphipathic alpha-helix) and capsid protein VP4 are externalized. Together, they shape a pore in the host membrane through which viral genome is translocated to host cell cytoplasm. Functionally, forms an icosahedral capsid of pseudo T=3 symmetry with capsid proteins VP2 and VP3. The capsid is 300 Angstroms in diameter, composed of 60 copies of each capsid protein and enclosing the viral positive strand RNA genome. In terms of biological role, lies on the inner surface of the capsid shell. After binding to the host receptor, the capsid undergoes conformational changes. Capsid protein VP4 is released, Capsid protein VP1 N-terminus is externalized, and together, they shape a pore in the host membrane through which the viral genome is translocated into the host cell cytoplasm. Component of immature procapsids, which is cleaved into capsid proteins VP4 and VP2 after maturation. Allows the capsid to remain inactive before the maturation step. Its function is as follows. Cysteine protease that cleaves viral polyprotein and specific host proteins. It is responsible for the autocatalytic cleavage between the P1 and P2 regions, which is the first cleavage occurring in the polyprotein. Also cleaves the host translation initiation factor EIF4G1, in order to shut down the capped cellular mRNA translation. Inhibits the host nucleus-cytoplasm protein and RNA trafficking by cleaving host members of the nuclear pores. Counteracts stress granule formation probably by antagonizing its assembly or promoting its dissassembly. Cleaves and inhibits host IFIH1/MDA5, thereby inhibiting the type-I IFN production and the establishment of the antiviral state. Cleaves and inhibits host MAVS, thereby inhibiting the type-I IFN production and the establishment of the antiviral state. Functionally, plays an essential role in the virus replication cycle by acting as a viroporin. Creates a pore in the host endoplasmic reticulum and as a consequence releases Ca2+ in the cytoplasm of infected cell. In turn, high levels of cytoplasmic calcium may trigger membrane trafficking and transport of viral ER-associated proteins to viroplasms, sites of viral genome replication. In terms of biological role, induces and associates with structural rearrangements of intracellular membranes. Displays RNA-binding, nucleotide binding and NTPase activities. May play a role in virion morphogenesis and viral RNA encapsidation by interacting with the capsid protein VP3. Localizes the viral replication complex to the surface of membranous vesicles. Together with protein 3CD binds the Cis-Active RNA Element (CRE) which is involved in RNA synthesis initiation. Acts as a cofactor to stimulate the activity of 3D polymerase, maybe through a nucleid acid chaperone activity. Its function is as follows. Localizes the viral replication complex to the surface of membranous vesicles. It inhibits host cell endoplasmic reticulum-to-Golgi apparatus transport and causes the disassembly of the Golgi complex, possibly through GBF1 interaction. This would result in depletion of MHC, trail receptors and IFN receptors at the host cell surface. Plays an essential role in viral RNA replication by recruiting ACBD3 and PI4KB at the viral replication sites, thereby allowing the formation of the rearranged membranous structures where viral replication takes place. Functionally, acts as a primer for viral RNA replication and remains covalently bound to viral genomic RNA. VPg is uridylylated prior to priming replication into VPg-pUpU. The oriI viral genomic sequence may act as a template for this. The VPg-pUpU is then used as primer on the genomic RNA poly(A) by the RNA-dependent RNA polymerase to replicate the viral genome. During genome replication, the VPg-RNA linkage is removed by the host TDP2, thereby accelerating replication. During the late stage of the replication cycle, host TDP2 is excluded from sites of viral RNA synthesis and encapsidation, allowing for the generation of progeny virions. In terms of biological role, involved in the viral replication complex and viral polypeptide maturation. It exhibits protease activity with a specificity and catalytic efficiency that is different from protease 3C. Protein 3CD lacks polymerase activity. Protein 3CD binds to the 5'UTR of the viral genome. Replicates the viral genomic RNA on the surface of intracellular membranes. May form linear arrays of subunits that propagate along a strong head-to-tail interaction called interface-I. Covalently attaches UMP to a tyrosine of VPg, which is used to prime RNA synthesis. The positive stranded RNA genome is first replicated at virus induced membranous vesicles, creating a dsRNA genomic replication form. This dsRNA is then used as template to synthesize positive stranded RNA genomes. ss(+)RNA genomes are either translated, replicated or encapsidated. Its function is as follows. Major viral protease that mediates proteolytic processing of the polyprotein. Cleaves host EIF5B, contributing to host translation shutoff. Also cleaves host PABPC1, contributing to host translation shutoff. Cleaves host NLRP1, triggers host N-glycine-mediated degradation of the autoinhibitory NLRP1 N-terminal fragment. The polypeptide is Genome polyprotein (Coxsackievirus B4 (strain E2)).